Consider the following 562-residue polypeptide: Wee1-like protein kinase 2 (562 aa).

Disordered stretches follow at residues 1 to 86 and 161 to 181; these read MRTA…DKGV and YRQA…DDCS. The segment covering 35–48 has biased composition (polar residues); the sequence is HSNQRGSPVNSWRA. A Protein kinase domain is found at 217-491; that stretch reads FLEIEKIGAG…AKNSLLRRCV (275 aa). ATP-binding positions include 223–231 and Lys-246; that span reads IGAGEFGSV. Catalysis depends on Asp-344, which acts as the Proton acceptor. Mg(2+) contacts are provided by Asn-349 and Asp-381. Residues 494–520 are a coiled coil; it reads AAQLQKQLNVEKFKTAMLERELKAAKL.

Belongs to the protein kinase superfamily. Ser/Thr protein kinase family. WEE1 subfamily.

It is found in the nucleus. It carries out the reaction L-tyrosyl-[protein] + ATP = O-phospho-L-tyrosyl-[protein] + ADP + H(+). Oocyte-specific protein tyrosine kinase that phosphorylates and inhibits cdk1 and acts as a regulator of meiosis. Required to maintain meiotic arrest in oocytes by phosphorylating cdk1 at 'Tyr-15', leading to inhibit cdk1 activity and prevent meiotic reentry. The chain is Wee1-like protein kinase 2 (wee2) from Xenopus tropicalis (Western clawed frog).